The following is an 872-amino-acid chain: DNA mismatch repair protein MutS (872 aa).

602 to 609 (GPNMSGKS) lines the ATP pocket.

It belongs to the DNA mismatch repair MutS family.

This protein is involved in the repair of mismatches in DNA. It is possible that it carries out the mismatch recognition step. This protein has a weak ATPase activity. This chain is DNA mismatch repair protein MutS, found in Staphylococcus aureus (strain MRSA252).